The sequence spans 51 residues: Large ribosomal subunit protein eL39 (51 aa).

Belongs to the eukaryotic ribosomal protein eL39 family. In terms of assembly, interacts with impact.

This Ictalurus punctatus (Channel catfish) protein is Large ribosomal subunit protein eL39 (rpl39).